We begin with the raw amino-acid sequence, 223 residues long: Putative NAD(P)H nitroreductase SAB2397c (223 aa).

It belongs to the nitroreductase family. FMN serves as cofactor.

This is Putative NAD(P)H nitroreductase SAB2397c from Staphylococcus aureus (strain bovine RF122 / ET3-1).